A 322-amino-acid chain; its full sequence is Epoxide hydrolase A (322 aa).

The region spanning 27–131 is the AB hydrolase-1 domain; the sequence is PVVILAHGFP…AVAALSVPAL (105 aa). Aspartate 103 acts as the Nucleophile in catalysis. Histidine 298 (proton acceptor) is an active-site residue.

It belongs to the AB hydrolase superfamily. Epoxide hydrolase family. In terms of assembly, homodimer.

It carries out the reaction an epoxide + H2O = an ethanediol. In terms of biological role, could be involved in detoxification of extraneous host-cell epoxides. Catalyzes the hydrolysis of epoxide-containing substrates. The protein is Epoxide hydrolase A (ephA) of Mycobacterium tuberculosis (strain ATCC 25618 / H37Rv).